We begin with the raw amino-acid sequence, 127 residues long: Glycine cleavage system H protein (127 aa).

Residues 22 to 104 (KARIGITHFA…YEKAWMIVVE (83 aa)) enclose the Lipoyl-binding domain. The residue at position 63 (Lys-63) is an N6-lipoyllysine.

This sequence belongs to the GcvH family. In terms of assembly, the glycine cleavage system is composed of four proteins: P, T, L and H. Requires (R)-lipoate as cofactor.

Its function is as follows. The glycine cleavage system catalyzes the degradation of glycine. The H protein shuttles the methylamine group of glycine from the P protein to the T protein. In terms of biological role, is also involved in protein lipoylation via its role as an octanoyl/lipoyl carrier protein intermediate. The protein is Glycine cleavage system H protein of Bacillus subtilis (strain 168).